Here is a 422-residue protein sequence, read N- to C-terminus: Osteomodulin (422 aa).

Residues 1–20 form the signal peptide; sequence MGFSSLVCVLFFFLGVKVYC. The propeptide occupies 21–27; that stretch reads QYESYQW. Sulfotyrosine occurs at positions 22, 25, 31, 39, 51, and 77. The 39-residue stretch at 53 to 91 folds into the LRRNT domain; that stretch reads APFHQHTLGCASECFCPPNFPSSMYCDNRKLKTIPNIPA. 11 LRR repeats span residues 92–113, 116–129, 142–164, 165–184, 187–207, 213–233, 234–255, 258–280, 281–294, 301–322, and 331–353; these read HIQQ…SFIN, HLKE…KIKS, NLLQ…PKSL, ERIF…AVNG, NLTM…QEKV, KLMQ…GLPS, SLMY…YFNK, KLHA…FNLS, NLIE…KLKQ, NLEH…VMCP, and HLTH…IFLC. N-linked (GlcNAc...) asparagine glycans are attached at residues asparagine 113 and asparagine 121. Asparagine 187 carries an N-linked (GlcNAc...) asparagine glycan. 2 N-linked (GlcNAc...) asparagine glycosylation sites follow: asparagine 242 and asparagine 278. Asparagine 316 carries N-linked (GlcNAc...) asparagine glycosylation. Cysteine 321 and cysteine 353 form a disulfide bridge. Residues 385 to 422 are disordered; the sequence is DDGDSEDHDDHHEGPEEEGTEENIDAHYYGSQEWQETI. Sulfotyrosine is present on residues tyrosine 412 and tyrosine 413.

This sequence belongs to the small leucine-rich proteoglycan (SLRP) family. SLRP class II subfamily. As to quaternary structure, binds the alpha(V)beta(3)-integrin. The N-terminus is blocked. Post-translationally, glycosylated; contains keratan sulfate. In terms of processing, sulfated on tyrosine residue(s). In terms of tissue distribution, bone specific (at protein level).

It is found in the secreted. It localises to the extracellular space. The protein resides in the extracellular matrix. Its function is as follows. May be implicated in biomineralization processes. Has a function in binding of osteoblasts via the alpha(V)beta(3)-integrin. In Bos taurus (Bovine), this protein is Osteomodulin (OMD).